Reading from the N-terminus, the 99-residue chain is uncharacterized protein (99 aa).

This is an uncharacterized protein from Escherichia coli O157:H7.